The following is a 967-amino-acid chain: Isoleucine--tRNA ligase 2 (967 aa).

The 'HIGH' region motif lies at 58 to 68; the sequence is PYANGDIHIGH. The tract at residues 430–463 is disordered; it reads EADPGRADVTEEAGATGEARKVGKAEEAEEAGPV. Residue Glu598 participates in L-isoleucyl-5'-AMP binding. Residues 639-643 carry the 'KMSKS' region motif; that stretch reads KMSKS. Residue Lys642 participates in ATP binding. Positions 922, 925, 942, and 945 each coordinate Zn(2+).

It belongs to the class-I aminoacyl-tRNA synthetase family. IleS type 1 subfamily. In terms of assembly, monomer. Requires Zn(2+) as cofactor.

It is found in the cytoplasm. It carries out the reaction tRNA(Ile) + L-isoleucine + ATP = L-isoleucyl-tRNA(Ile) + AMP + diphosphate. Its function is as follows. Catalyzes the attachment of isoleucine to tRNA(Ile). As IleRS can inadvertently accommodate and process structurally similar amino acids such as valine, to avoid such errors it has two additional distinct tRNA(Ile)-dependent editing activities. One activity is designated as 'pretransfer' editing and involves the hydrolysis of activated Val-AMP. The other activity is designated 'posttransfer' editing and involves deacylation of mischarged Val-tRNA(Ile). This Burkholderia pseudomallei (strain K96243) protein is Isoleucine--tRNA ligase 2.